The following is a 166-amino-acid chain: Nascent polypeptide-associated complex subunit beta (166 aa).

Disordered stretches follow at residues 1-40 (MVLN…EDPK) and 129-166 (HAAS…DKLD). An NAC-A/B domain is found at 35–100 (GGEDPKLQAA…GVDKELTELV (66 aa)). Positions 141–153 (DDDDVPDVVENFD) are enriched in acidic residues. Over residues 154–166 (EADKKETEVDKLD) the composition is skewed to basic and acidic residues.

The protein belongs to the NAC-beta family. In terms of assembly, part of the nascent polypeptide-associated complex (NAC), consisting of EGD2 and EGD1. NAC associates with ribosomes via EGD1.

Its subcellular location is the cytoplasm. It localises to the nucleus. Functionally, component of the nascent polypeptide-associated complex (NAC), a dynamic component of the ribosomal exit tunnel, protecting the emerging polypeptides from interaction with other cytoplasmic proteins to ensure appropriate nascent protein targeting. The NAC complex also promotes mitochondrial protein import by enhancing productive ribosome interactions with the outer mitochondrial membrane and blocks the inappropriate interaction of ribosomes translating non-secretory nascent polypeptides with translocation sites in the membrane of the endoplasmic reticulum. EGD1 may act as a transcription factor that exert a negative effect on the expression of several genes that are transcribed by RNA polymerase II. This chain is Nascent polypeptide-associated complex subunit beta (EGD1), found in Mycosarcoma maydis (Corn smut fungus).